A 340-amino-acid chain; its full sequence is Cytosolic Fe-S cluster assembly factor NBP35 (340 aa).

C31, C45, C48, and C54 together coordinate [4Fe-4S] cluster. An ATP-binding site is contributed by G84–S91. 2 residues coordinate [4Fe-4S] cluster: C257 and C260.

It belongs to the Mrp/NBP35 ATP-binding proteins family. NUBP1/NBP35 subfamily. As to quaternary structure, heterotetramer of 2 NBP35 and 2 CFD1 chains. [4Fe-4S] cluster is required as a cofactor.

It is found in the cytoplasm. Its function is as follows. Component of the cytosolic iron-sulfur (Fe/S) protein assembly (CIA) machinery. Required for maturation of extramitochondrial Fe-S proteins. The NBP35-CFD1 heterotetramer forms a Fe-S scaffold complex, mediating the de novo assembly of an Fe-S cluster and its transfer to target apoproteins. The protein is Cytosolic Fe-S cluster assembly factor NBP35 of Phaeosphaeria nodorum (strain SN15 / ATCC MYA-4574 / FGSC 10173) (Glume blotch fungus).